A 156-amino-acid chain; its full sequence is Small ribosomal subunit protein uS7 (156 aa).

Belongs to the universal ribosomal protein uS7 family. Part of the 30S ribosomal subunit. Contacts proteins S9 and S11.

Its function is as follows. One of the primary rRNA binding proteins, it binds directly to 16S rRNA where it nucleates assembly of the head domain of the 30S subunit. Is located at the subunit interface close to the decoding center, probably blocks exit of the E-site tRNA. This chain is Small ribosomal subunit protein uS7, found in Streptococcus gordonii (strain Challis / ATCC 35105 / BCRC 15272 / CH1 / DL1 / V288).